The primary structure comprises 204 residues: Outer-membrane lipoprotein carrier protein (204 aa).

The signal sequence occupies residues 1 to 21 (MKKIAVTCALLSAFAVSSVWA). Residues 169-204 (QRSSYQLKSQQNGAVDMSKFTFTPPQGVTVDDQRNK) are disordered. Positions 171–181 (SSYQLKSQQNG) are enriched in polar residues.

Belongs to the LolA family. As to quaternary structure, monomer.

It localises to the periplasm. In terms of biological role, participates in the translocation of lipoproteins from the inner membrane to the outer membrane. Only forms a complex with a lipoprotein if the residue after the N-terminal Cys is not an aspartate (The Asp acts as a targeting signal to indicate that the lipoprotein should stay in the inner membrane). The sequence is that of Outer-membrane lipoprotein carrier protein from Cronobacter sakazakii (strain ATCC BAA-894) (Enterobacter sakazakii).